The chain runs to 407 residues: Mitochondrial protein import protein mas5 (407 aa).

Residues 6 to 68 (KLYEVLNVDV…EKRATYDRFG (63 aa)) form the J domain. Substrate-binding positions include Leu110 and 129 to 131 (LAL). A CR-type zinc finger spans residues 124 to 207 (GKTTKLALQK…CDGAKVISQR (84 aa)). Zn(2+) is bound by residues Cys137, Cys140, Cys153, Cys156, Cys179, Cys182, Cys195, and Cys198. 4 CXXCXGXG motif repeats span residues 137 to 144 (CPKCSGRG), 153 to 160 (CASCNGSG), 179 to 186 (CPDCNGAG), and 195 to 202 (CKECDGAK). Residues 209 to 210 (IL) and 241 to 243 (VIF) each bind substrate. Residues 375–407 (VRIDNNVDPTTATSMDEDEDEEGGHPGVQCAQQ) are disordered. The residue at position 404 (Cys404) is a Cysteine methyl ester. Cys404 carries S-farnesyl cysteine lipidation. The propeptide at 405–407 (AQQ) is removed in mature form.

In terms of assembly, homodimer.

It localises to the cytoplasm. The protein resides in the nucleus. Its function is as follows. Probably involved in mitochondrial protein import. Plays a role in microtubule cytoskeleton organization. The chain is Mitochondrial protein import protein mas5 (mas5) from Schizosaccharomyces pombe (strain 972 / ATCC 24843) (Fission yeast).